Here is a 110-residue protein sequence, read N- to C-terminus: Nucleoid-associated protein Tola_2216 (110 aa).

Belongs to the YbaB/EbfC family. As to quaternary structure, homodimer.

Its subcellular location is the cytoplasm. The protein resides in the nucleoid. Functionally, binds to DNA and alters its conformation. May be involved in regulation of gene expression, nucleoid organization and DNA protection. The polypeptide is Nucleoid-associated protein Tola_2216 (Tolumonas auensis (strain DSM 9187 / NBRC 110442 / TA 4)).